The following is a 303-amino-acid chain: D-alanine--D-alanine ligase (303 aa).

One can recognise an ATP-grasp domain in the interval lysine 104 to glutamate 300. Isoleucine 132 to serine 187 provides a ligand contact to ATP. Mg(2+) contacts are provided by aspartate 254, glutamate 267, and asparagine 269.

It belongs to the D-alanine--D-alanine ligase family. Mg(2+) serves as cofactor. The cofactor is Mn(2+).

Its subcellular location is the cytoplasm. It carries out the reaction 2 D-alanine + ATP = D-alanyl-D-alanine + ADP + phosphate + H(+). The protein operates within cell wall biogenesis; peptidoglycan biosynthesis. Functionally, cell wall formation. The polypeptide is D-alanine--D-alanine ligase (Glaesserella parasuis serovar 5 (strain SH0165) (Haemophilus parasuis)).